A 127-amino-acid polypeptide reads, in one-letter code: UPF0389 protein GA21628 (127 aa).

The chain crosses the membrane as a helical span at residues 69-88; sequence IRLANIMIALTVIGCGIMVY.

This sequence belongs to the UPF0389 family.

It is found in the membrane. The sequence is that of UPF0389 protein GA21628 from Drosophila pseudoobscura pseudoobscura (Fruit fly).